A 280-amino-acid polypeptide reads, in one-letter code: uncharacterized protein (280 aa).

This is an uncharacterized protein from Acanthamoeba polyphaga mimivirus (APMV).